Reading from the N-terminus, the 678-residue chain is Beta-catenin-like protein hmp-2 (678 aa).

ARM repeat units follow at residues 153-192 (RGGP…NLLM), 280-319 (PSNK…RNLS), 320-359 (DSAT…NLTC), 362-403 (TRNK…HCTA), and 409-448 (EEAQ…NSAL).

It belongs to the beta-catenin family. Component of a core catenin-cadherin complex consisting of hmr-1, hmp-1 and hmp-2; the complex localizes to adherens junctions. Interacts with hmr-1; the interaction is direct. May interact with hmp-1. Interacts with frk-1. In terms of tissue distribution, epidermal cells.

The protein localises to the cell junction. Its subcellular location is the adherens junction. In terms of biological role, required for cell migration during body enclosure and cell shape changes during body elongation. Plays a role in recruitment of the cadherin protein hmr-1 to adherens junctions. This Caenorhabditis elegans protein is Beta-catenin-like protein hmp-2 (hmp-2).